The primary structure comprises 747 residues: Myotubularin-related protein 12 (747 aa).

The span at 1-14 (MLGKGVVGGGGGTK) shows a compositional bias: gly residues. Residues 1–21 (MLGKGVVGGGGGTKGPKPSFV) form a disordered region. The Myotubularin phosphatase domain maps to 205 to 643 (FDTLKDWCWE…PEIKVWAQRY (439 aa)). The interval 449-558 (VPVFLLFLDC…KGQRKGMRFK (110 aa)) is interaction with MTM1. Phosphoserine is present on residues S564, S601, and S716.

It belongs to the protein-tyrosine phosphatase family. Non-receptor class myotubularin subfamily. In terms of assembly, heterodimer with lipid phosphatase MTM1. Heterodimer with lipid phosphatase MTMR2.

The protein localises to the cytoplasm. It is found in the sarcoplasmic reticulum. Its subcellular location is the myofibril. The protein resides in the sarcomere. Its function is as follows. Acts as an adapter for the myotubularin-related phosphatases. Regulates phosphatase MTM1 protein stability and possibly its intracellular location. By stabilizing MTM1 protein levels, required for skeletal muscle maintenance but not for myogenesis. The polypeptide is Myotubularin-related protein 12 (MTMR12) (Pongo abelii (Sumatran orangutan)).